The chain runs to 263 residues: Undecaprenyl-diphosphatase 3 (263 aa).

8 helical membrane passes run 15–37 (GLTE…LIGF), 42–62 (AKVF…VIFW), 83–103 (LHII…HSAI), 106–126 (VLFG…LMIV), 142–162 (ITYK…WPGF), 183–203 (AEYT…LDLI), 216–236 (LFAT…VSFL), and 242–262 (VKLT…YFFI).

The protein belongs to the UppP family.

Its subcellular location is the cell membrane. It catalyses the reaction di-trans,octa-cis-undecaprenyl diphosphate + H2O = di-trans,octa-cis-undecaprenyl phosphate + phosphate + H(+). In terms of biological role, catalyzes the dephosphorylation of undecaprenyl diphosphate (UPP). Confers resistance to bacitracin. This Bacillus thuringiensis subsp. konkukian (strain 97-27) protein is Undecaprenyl-diphosphatase 3.